A 324-amino-acid polypeptide reads, in one-letter code: Uroporphyrinogen decarboxylase (324 aa).

Residues 14–18 (RQAGR), Phe32, Asp63, Tyr136, Ser191, and His302 each bind substrate.

The protein belongs to the uroporphyrinogen decarboxylase family. Homodimer.

The protein localises to the cytoplasm. The enzyme catalyses uroporphyrinogen III + 4 H(+) = coproporphyrinogen III + 4 CO2. It functions in the pathway porphyrin-containing compound metabolism; protoporphyrin-IX biosynthesis; coproporphyrinogen-III from 5-aminolevulinate: step 4/4. Functionally, catalyzes the decarboxylation of four acetate groups of uroporphyrinogen-III to yield coproporphyrinogen-III. The protein is Uroporphyrinogen decarboxylase of Neorickettsia sennetsu (strain ATCC VR-367 / Miyayama) (Ehrlichia sennetsu).